Consider the following 299-residue polypeptide: MAEEQARHVKNGLECIRALKAEPIGSLAIEEAMAAWSEISDNPGQERATCREEKAGSSGLSKPCLSAIGSTEGGAPRIRGQGPGESDDDAETLGIPPRNLQASSTGLQCYYVYDHSGEAVKGIQDADSIMVQSGLDGDSTLSGGDNESENSDVDIGEPDTEGYAITDRGSAPISMGFRASDVETAEGGEIHELLRLQSRGNNFPKLGKTLNVPPPPDPGRASTSGTPIKKGHRREISLIWNGDRVFIDRWCNPMCSKVTLGTIRARCTCGECPRVCEQCRTDTGVDTRIWYHNLPEIPE.

Residues 41–99 form a disordered region; the sequence is DNPGQERATCREEKAGSSGLSKPCLSAIGSTEGGAPRIRGQGPGESDDDAETLGIPPRN. Positions 110–120 are interaction with host STAT1; the sequence is YYVYDHSGEAV. Low complexity predominate over residues 134–145; sequence GLDGDSTLSGGD. The tract at residues 134-162 is disordered; the sequence is GLDGDSTLSGGDNESENSDVDIGEPDTEG. Over residues 146–160 the composition is skewed to acidic residues; that stretch reads NESENSDVDIGEPDT. Histidine 232, cysteine 251, cysteine 255, cysteine 267, cysteine 269, cysteine 272, cysteine 276, and cysteine 279 together coordinate Zn(2+).

Belongs to the paramyxoviruses V protein family. As to quaternary structure, interacts with host IFIH1/MDA5 and DHX58/LGP2; these interactions are involved in the inhibition of the host type I interferon signaling pathway. Interacts with host TYK2; this interaction inhibits the type I interferon signaling pathway without affecting the type II pathway. Interacts with host IRF7; this interaction inhibits IRF7 translocation to the nucleus. Interacts with host CHUK. Interacts with host RELA/p65; this interaction inhibits the nuclear translocation of NF-KappaB. Interacts (via N-terminus) with host STAT1 and JAK1; these interactions inhibit STAT1 phosphorylation by Jak1 and thereby the type I interferon signaling pathway. Interacts (via C-terminus) with host STAT2; this interaction is involved in the inhibition of the host type I interferon signaling pathway. Forms a complex with host PPP1CA and PPP1CC; this interaction prevents dephosphorylation of host IFIH1/MDA5 and leads to the inhibition of the host type I interferon signaling pathway. Interacts with host IRF9; this interaction prevents the binding of IRF9 to STAT2 and thereby the type I interferon signaling pathway.

It localises to the host cytoplasm. In terms of biological role, plays an essential role in the inhibition of host immune response. Prevents the establishment of cellular antiviral state by blocking interferon-alpha/beta (IFN-alpha/beta) production and signaling pathway. Interacts with host IFIH1/MDA5 and DHX58/LGP2 to inhibit the transduction pathway involved in the activation of IFN-beta promoter, thus protecting the virus against cell antiviral state. Blocks the type I interferon signaling pathway by interacting with host TYK2 and thereby inhibiting downstream STAT1 and STAT2 phosphorylation. Moderately affects the type II interferon signaling. The protein is Non-structural protein V (P/V) of Measles virus (strain Edmonston-Schwarz vaccine) (MeV).